Consider the following 243-residue polypeptide: Anti-H(O) lectin 1 (243 aa).

N-linked (GlcNAc...) asparagine; partial glycosylation occurs at asparagine 10. Asparagine 116 is a glycosylation site (N-linked (GlcNAc...) asparagine). Mn(2+) contacts are provided by glutamate 126 and aspartate 128. Ca(2+) contacts are provided by aspartate 128, asparagine 135, and aspartate 138. Residues aspartate 138 and histidine 143 each coordinate Mn(2+).

The protein belongs to the leguminous lectin family.

L-fucose specific lectin. In Ulex europaeus (Furze), this protein is Anti-H(O) lectin 1.